The following is a 433-amino-acid chain: N-lysine methyltransferase SMYD2 (433 aa).

In terms of domain architecture, SET spans 7–241 (GGLERFCSAG…PGDEVFTSYI (235 aa)). An S-adenosyl-L-methionine-binding site is contributed by 17-19 (KGR). Zn(2+)-binding residues include C52, C55, C65, C68, C74, C78, H86, and C90. An MYND-type zinc finger spans residues 52–90 (CECCFARKEGLSKCGRCKQAFYCDVECQKEDWPLHKLEC). S-adenosyl-L-methionine contacts are provided by residues H137, 206-207 (NH), and 258-260 (YFF). S283 carries the post-translational modification Phosphoserine.

The protein belongs to the class V-like SAM-binding methyltransferase superfamily. As to quaternary structure, interacts (via MYND-type zinc finger) with EPB41L3. Interacts (via SET domain) with p53/TP53. Interacts with RB1 and HSP90AA1. Interacts with RNA polymerase II and HELZ. Interacts with SIN3A and HDAC1. In terms of tissue distribution, highly expressed in heart, skeletal muscle and brain tissue. During cardiac development, it is differentially expressed with highest expression in the neonatal heart while very low expression is detected at 12.5 dpc and adult. Specifically expressed in cardiomyocytes (at protein level).

Its subcellular location is the cytoplasm. The protein localises to the cytosol. It localises to the nucleus. It carries out the reaction L-lysyl(4)-[histone H3] + 3 S-adenosyl-L-methionine = N(6),N(6),N(6)-trimethyl-L-lysyl(4)-[histone H3] + 3 S-adenosyl-L-homocysteine + 3 H(+). The enzyme catalyses L-lysyl-[protein] + S-adenosyl-L-methionine = N(6)-methyl-L-lysyl-[protein] + S-adenosyl-L-homocysteine + H(+). Protein-lysine N-methyltransferase that methylates both histones and non-histone proteins, including p53/TP53 and RB1. Specifically trimethylates histone H3 'Lys-4' (H3K4me3) in vivo. The activity requires interaction with HSP90alpha. Shows even higher methyltransferase activity on p53/TP53. Monomethylates 'Lys-370' of p53/TP53, leading to decreased DNA-binding activity and subsequent transcriptional regulation activity of p53/TP53. Monomethylates RB1 at 'Lys-860'. The chain is N-lysine methyltransferase SMYD2 (Smyd2) from Mus musculus (Mouse).